The sequence spans 481 residues: Guanine nucleotide exchange factor C9orf72 homolog (481 aa).

The 172-residue stretch at 23–194 (SPLLAATFAY…ELLASMRSHS (172 aa)) folds into the uDENN C9ORF72-type domain. The 144-residue stretch at 200-343 (DIADTVLNDD…SELTAFWRAT (144 aa)) folds into the cDENN C9ORF72-type domain. Residues 370–464 (VLHRDTLVKA…IKPGLHSFIF (95 aa)) form the dDENN C9ORF72-type domain. The segment at 461–481 (SFIFGRPFYTSVQERDVLMTF) is required for the homodimerization of the C9orf72-SMCR8 complex.

As to quaternary structure, component of the C9orf72-SMCR8 complex, at least composed of C9orf72, SMCR8 and WDR41. The complex is formed of two protomers, each individually consisting of one molecule each of C9orf72, SMCR8 and WDR41. The protomers homodimerize via an interaction between C9orf72 (via C-terminus) and SMCR8 (via N-terminus). Within each protomer SMCR8 (via DENN domain) acts as a bridging protein between WDR41 (via C-terminus and N-terminus) and C9orf72 (via C-terminus). The C9orf72-SMCR8 complex associates with the ULK1/ATG1 kinase complex. Interacts with ULK1/ATG1 kinase complex members ULK1, ATG13 and RB1CC1. Interacts with SMCR8; the interaction is direct. Interacts with HNRNPA1, HNRNPA2B1 and UBQLN2. Interacts with small Rab GTPase RAB1A; the interaction mediates recruitment of RAB1A to the ULK1/ATG1 kinase complex. Also interacts with small Rab GTPase RAB7A. Interacts with cofilin. Interacts with GTP-binding proteins ARF1 and ARF6. Interacts with the DLG4/PSD-95. Interacts with CARM1 (via PH domain-like fold). Interacts with RAB39A and RAB39B (in GDP-bound forms); functions as GEF for RAB39A and RAB39B.

The protein localises to the nucleus. Its subcellular location is the cytoplasm. It localises to the P-body. It is found in the stress granule. The protein resides in the endosome. The protein localises to the lysosome. Its subcellular location is the cytoplasmic vesicle. It localises to the autophagosome. It is found in the autolysosome. The protein resides in the secreted. The protein localises to the cell projection. Its subcellular location is the axon. It localises to the growth cone. It is found in the perikaryon. Functionally, acts as a guanine-nucleotide releasing factor (GEF) for Rab GTPases by promoting the conversion of inactive RAB-GDP to the active form RAB-GTP. Acts as a GEF for RAB39A which enables HOPS-mediated autophagosome-lysosome membrane tethering and fusion in mammalian autophagy. Component of the C9orf72-SMCR8 complex where both subunits display GEF activity and that regulates autophagy. As part of the C9orf72-SMCR8-WDR41 (CSW) complex, functions as GEF for RAB8A and RAB39B, thereby promoting autophagosome maturation. As part of the C9orf72-SMCR8 complex, also functions as GTPase activating protein (GAP) for RAB8A and RAB11A in vitro. The C9orf72-SMCR8 complex also acts as a regulator of autophagy initiation by interacting with the ULK1/ATG1 kinase complex and modulating its protein kinase activity. Promotes initiation of autophagy by regulating the RAB1A-dependent trafficking of the ULK1/ATG1 kinase complex to the phagophore which leads to autophagosome formation. Acts as a regulator of mTORC1 signaling by promoting phosphorylation of mTORC1 substrates. Plays a role in endosomal trafficking. May be involved in regulating the maturation of phagosomes to lysosomes. Promotes the lysosomal localization and lysosome-mediated degradation of CARM1 which leads to inhibition of starvation-induced lipid metabolism. Regulates actin dynamics in motor neurons by inhibiting the GTP-binding activity of ARF6, leading to ARF6 inactivation. This reduces the activity of the LIMK1 and LIMK2 kinases which are responsible for phosphorylation and inactivation of cofilin, leading to CFL1/cofilin activation. Positively regulates axon extension and axon growth cone size in spinal motor neurons. Required for SMCR8 protein expression and localization at pre- and post-synaptic compartments in the forebrain, also regulates protein abundance of RAB3A and GRIA1/GLUR1 in post-synaptic compartments in the forebrain and hippocampus. Plays a role within the hematopoietic system in restricting inflammation and the development of autoimmunity. This is Guanine nucleotide exchange factor C9orf72 homolog from Rattus norvegicus (Rat).